Reading from the N-terminus, the 119-residue chain is UPF0102 protein Sare_1228 (119 aa).

This sequence belongs to the UPF0102 family.

This is UPF0102 protein Sare_1228 from Salinispora arenicola (strain CNS-205).